A 608-amino-acid polypeptide reads, in one-letter code: Glutamine--fructose-6-phosphate aminotransferase [isomerizing] (608 aa).

Catalysis depends on C2, which acts as the Nucleophile; for GATase activity. The Glutamine amidotransferase type-2 domain occupies 2–217 (CGIVGIVGHK…DGDWAVVGKT (216 aa)). SIS domains lie at 283 to 422 (TDID…ARGT) and 456 to 598 (LSRE…VDQP). The active-site For Fru-6P isomerization activity is the K603.

It is found in the cytoplasm. It catalyses the reaction D-fructose 6-phosphate + L-glutamine = D-glucosamine 6-phosphate + L-glutamate. In terms of biological role, involved in the production of the root hair deformation (HAD) factor specifically on medicago. The sequence is that of Glutamine--fructose-6-phosphate aminotransferase [isomerizing] (nodM) from Rhizobium leguminosarum bv. viciae.